A 230-amino-acid polypeptide reads, in one-letter code: ATP-dependent dethiobiotin synthetase BioD (230 aa).

Residue 12–17 participates in ATP binding; sequence DVGKTV. Residue T16 coordinates Mg(2+). K37 is an active-site residue. A substrate-binding site is contributed by T41. ATP contacts are provided by residues D49, 108–111, 168–169, and 198–200; these read EGAG, GS, and PEG. Mg(2+)-binding residues include D49 and E108.

Belongs to the dethiobiotin synthetase family. As to quaternary structure, homodimer. The cofactor is Mg(2+).

The protein localises to the cytoplasm. It carries out the reaction (7R,8S)-7,8-diammoniononanoate + CO2 + ATP = (4R,5S)-dethiobiotin + ADP + phosphate + 3 H(+). The protein operates within cofactor biosynthesis; biotin biosynthesis; biotin from 7,8-diaminononanoate: step 1/2. Its function is as follows. Catalyzes a mechanistically unusual reaction, the ATP-dependent insertion of CO2 between the N7 and N8 nitrogen atoms of 7,8-diaminopelargonic acid (DAPA, also called 7,8-diammoniononanoate) to form a ureido ring. This is ATP-dependent dethiobiotin synthetase BioD from Corynebacterium kroppenstedtii (strain DSM 44385 / JCM 11950 / CIP 105744 / CCUG 35717).